The sequence spans 124 residues: Small ribosomal subunit protein uS12 (124 aa).

Residues 1–26 form a disordered region; sequence MPTISQLVGSERKRLTKKTKSPALKA. Asp89 is subject to 3-methylthioaspartic acid. The segment at 104–124 is disordered; that stretch reads TAGVKDRRQSRSKYGAKAPKD.

This sequence belongs to the universal ribosomal protein uS12 family. Part of the 30S ribosomal subunit. Contacts proteins S8 and S17. May interact with IF1 in the 30S initiation complex.

With S4 and S5 plays an important role in translational accuracy. In terms of biological role, interacts with and stabilizes bases of the 16S rRNA that are involved in tRNA selection in the A site and with the mRNA backbone. Located at the interface of the 30S and 50S subunits, it traverses the body of the 30S subunit contacting proteins on the other side and probably holding the rRNA structure together. The combined cluster of proteins S8, S12 and S17 appears to hold together the shoulder and platform of the 30S subunit. This chain is Small ribosomal subunit protein uS12, found in Prochlorococcus marinus (strain MIT 9215).